We begin with the raw amino-acid sequence, 376 residues long: MLDLIQTRRDLHQIPEIGLEEFKTQAYLLDVIEKLTTGKDFVQIRTWRTGILVYLQGSQPERTIGWRTDIDGLPIVEQTGLPFASQHQGRMHACGHDFHMTIALGCLERALEEQPKNNLLFLFQPAEENEAGGMLMYEDGAFGDWLPNQFYGLHVRPDLKVGQIATNTHTLFAGTCEVKIRFKGKGGHAAFPHEANDALVAASYFVTQVQSVVSRNVNPIEGAVVTFGVFQAGTTNNVITDTAFLHGTIRALTQDMSLLVQKRVKTVAEGVAAAFDMEVEVELKQGGYLPVENNPALARELMDFFDEKDGIELIDIEPAMTGEDFGYLLSKVDGVMFWLGIDSPYALHHPQMSPKEEVLAIGVAAVSSFLKKKAAE.

Residue Asp-69 is part of the active site. Glu-128 serves as the catalytic Proton acceptor.

It belongs to the peptidase M20A family. N-acetyldiaminopimelate deacetylase subfamily.

The catalysed reaction is N-acetyl-(2S,6S)-2,6-diaminopimelate + H2O = (2S,6S)-2,6-diaminopimelate + acetate. It participates in amino-acid biosynthesis; L-lysine biosynthesis via DAP pathway; LL-2,6-diaminopimelate from (S)-tetrahydrodipicolinate (acetylase route): step 3/3. Catalyzes the conversion of N-acetyl-diaminopimelate to diaminopimelate and acetate. This is N-acetyldiaminopimelate deacetylase from Streptococcus pneumoniae (strain 70585).